A 64-amino-acid polypeptide reads, in one-letter code: Hypoxia-inducible lipid droplet-associated protein (64 aa).

The required for targeting to lipid droplets stretch occupies residues 1 to 37; it reads MKFMLNLYVLGIMLTLLSIFVRVMESLGGLLESPLPG. A helical membrane pass occupies residues 7 to 24; the sequence is LYVLGIMLTLLSIFVRVM. Residues 42 to 51 show a composition bias toward polar residues; sequence TRGQLANTQP. Residues 42–64 form a disordered region; that stretch reads TRGQLANTQPPKGLPDHPSRGVQ. The span at 55–64 shows a compositional bias: basic and acidic residues; the sequence is LPDHPSRGVQ.

The protein localises to the lipid droplet. It localises to the secreted. Its subcellular location is the membrane. Functionally, increases intracellular lipid accumulation. Stimulates expression of cytokines including IL6, MIF and VEGFA. Enhances cell growth and proliferation. This Mus musculus (Mouse) protein is Hypoxia-inducible lipid droplet-associated protein (Hilpda).